A 103-amino-acid chain; its full sequence is Small ribosomal subunit protein uS10 (103 aa).

This sequence belongs to the universal ribosomal protein uS10 family. Part of the 30S ribosomal subunit.

Functionally, involved in the binding of tRNA to the ribosomes. The protein is Small ribosomal subunit protein uS10 of Desulfatibacillum aliphaticivorans.